Here is a 406-residue protein sequence, read N- to C-terminus: Serine/threonine transporter SstT (406 aa).

The next 9 helical transmembrane spans lie at L21–L41, F45–I65, I79–F99, A138–L158, V179–I199, L213–V233, I285–L305, L313–A333, and I360–T380.

This sequence belongs to the dicarboxylate/amino acid:cation symporter (DAACS) (TC 2.A.23) family.

The protein resides in the cell membrane. It catalyses the reaction L-serine(in) + Na(+)(in) = L-serine(out) + Na(+)(out). The catalysed reaction is L-threonine(in) + Na(+)(in) = L-threonine(out) + Na(+)(out). Involved in the import of serine and threonine into the cell, with the concomitant import of sodium (symport system). This chain is Serine/threonine transporter SstT, found in Desulfitobacterium hafniense (strain Y51).